A 722-amino-acid chain; its full sequence is Host cell factor 2 (722 aa).

Kelch repeat units lie at residues 34–79, 83–130, 207–255, and 257–303; these read LMII…GFVC, RILV…RLGH, KMYV…VIGN, and MYIF…VSDS. 3 Fibronectin type-III domains span residues 359–460, 514–604, and 606–716; these read APSQ…VDSS, TPSN…TCTP, and FPGA…DQEK. Residues 398 to 476 form a disordered region; it reads ATSSDSSAAP…LAPNTSNNSS (79 aa). Residues 419-436 show a composition bias toward polar residues; sequence QGSNSTLHNSVSDTVNST.

Binds KMT2A/MLL1. Component of the MLL1/MLL complex, at least composed of KMT2A/MLL1, ASH2L, RBBP5, DPY30, WDR5, MEN1, HCFC1 and HCFC2. Interacts with TASOR. In terms of tissue distribution, expressed in the spermatogonia, spermatocytes and ovary.

The protein resides in the cytoplasm. It is found in the nucleus. This Mus musculus (Mouse) protein is Host cell factor 2 (Hcfc2).